Reading from the N-terminus, the 220-residue chain is Splicing factor U2AF 26 kDa subunit (220 aa).

Ala-2 carries the N-acetylalanine modification. A C3H1-type 1 zinc finger spans residues 12–40 (EKDKVNCSFYFKIGACRHGDRCSRLHNKP). An RRM domain is found at 65-147 (SHCHVSDVEV…QAVHAELSPV (83 aa)). The C3H1-type 2 zinc finger occupies 149–176 (DFRESCCRQYEMGECTRGGFCNFMHLRP). Residues 186–220 (YGRGPRHRSPPRSHTGHRPRERNRRRSPDHRHGRF) form a disordered region. The segment covering 189 to 220 (GPRHRSPPRSHTGHRPRERNRRRSPDHRHGRF) has biased composition (basic residues).

Belongs to the splicing factor SR family. In terms of assembly, interacts with GFI1, U2AF2 and C1QBP. Isoform 3 interacts with PER1. Post-translationally, isoform 3 is rapidly degraded by a proteasome-mediated degradation pathway. As to expression, ubiquitous. Highly expressed in the brain.

The protein resides in the nucleus. Its subcellular location is the nucleus speckle. The protein localises to the cytoplasm. Functionally, RNA-binding protein that function as a pre-mRNA splicing factor. Plays a critical role in both constitutive and enhancer-dependent splicing by mediating protein-protein interactions and protein-RNA interactions required for accurate 3'-splice site selection. It can functionally substitute for U2AF1 in constitutive splicing and enhancer-dependent splicing. Acts by enhancing the binding of U2AF2 to weak pyrimidine tracts. Also participates in the regulation of alternative pre-mRNA splicing. Activates exon 5 skipping of PTPRC during T-cell activation; an event reversed by GFI1. Binds to RNA at the AG dinucleotide at the 3'-splice site. Shows a preference for AGC or AGA. Alternative splicing of U2AF1L4 may play a role in connecting the circadian rhythm to changing external cues: may provide a circadian buffering system in central and periphery clocks that allows synchronized adaption to clock-resetting stimuli in order to prevent potentially pathogenic desynchronization. The chain is Splicing factor U2AF 26 kDa subunit (U2af1l4) from Mus musculus (Mouse).